Here is a 333-residue protein sequence, read N- to C-terminus: Trans-1,2-dihydrobenzene-1,2-diol dehydrogenase (333 aa).

The protein belongs to the Gfo/Idh/MocA family. As to quaternary structure, homodimer.

The catalysed reaction is (1R,2R)-1,2-dihydrobenzene-1,2-diol + NADP(+) = catechol + NADPH + H(+). The enzyme catalyses D-xylose + NADP(+) = D-xylono-1,5-lactone + NADPH + H(+). The sequence is that of Trans-1,2-dihydrobenzene-1,2-diol dehydrogenase (Dhdh) from Mus musculus (Mouse).